The chain runs to 423 residues: Carboxypeptidase B2 (423 aa).

An N-terminal signal peptide occupies residues 1 to 22; it reads MKLCSLAVLVPIVLFCEQHVFA. A propeptide spans 23-114 (activation peptide); that stretch reads FQSGQVLAAL…QISNDTVSPR (92 aa). Asn-44, Asn-73, and Asn-85 each carry an N-linked (GlcNAc...) asparagine glycan. A glycan (N-linked (GlcNAc...) (complex) asparagine) is linked at Asn-108. The Peptidase M14 domain occupies 122 to 419; that stretch reads QYHSLNEIYS…AAVSKIAWHV (298 aa). Cys-178 and Cys-191 are joined by a disulfide. Positions 181 and 184 each coordinate Zn(2+). Substrate contacts are provided by residues 181–184 and Arg-239; that span reads HARE. N-linked (GlcNAc...) asparagine; partial glycosylation occurs at Asn-241. 2 disulfide bridges follow: Cys-250–Cys-274 and Cys-265–Cys-279. Residue 256 to 257 participates in substrate binding; sequence NR. His-310 contributes to the Zn(2+) binding site. Residues 311-312 and Tyr-363 contribute to the substrate site; that span reads SY. Glu-385 (proton donor/acceptor) is an active-site residue.

It belongs to the peptidase M14 family. Zn(2+) serves as cofactor. Post-translationally, N-glycosylated. N-glycan at Asn-108: Hex5HexNAc4. Plasma; synthesized in the liver.

The protein resides in the secreted. It catalyses the reaction Release of C-terminal Arg and Lys from a polypeptide.. TAFI/CPB2 is unique among carboxypeptidases in that it spontaneously inactivates with a short half-life, a property that is crucial for its role in controlling blood clot lysis. The zymogen is stabilized by interactions with the activation peptide. Release of the activation peptide increases a dynamic flap mobility and in time this leads to conformational changes that disrupt the catalytic site and expose a cryptic thrombin-cleavage site present at Arg-324. Functionally, cleaves C-terminal arginine or lysine residues from biologically active peptides such as kinins or anaphylatoxins in the circulation thereby regulating their activities. Down-regulates fibrinolysis by removing C-terminal lysine residues from fibrin that has already been partially degraded by plasmin. The polypeptide is Carboxypeptidase B2 (CPB2) (Homo sapiens (Human)).